Here is a 231-residue protein sequence, read N- to C-terminus: NKG2-C type II integral membrane protein (231 aa).

Positions 1–12 are enriched in polar residues; it reads MNKQRGTFSEVS. Residues 1-32 are disordered; it reads MNKQRGTFSEVSLAQDPKRQQRKPKGNKSSIS. Topologically, residues 1-70 are cytoplasmic; that stretch reads MNKQRGTFSE…CQGLLPPPEK (70 aa). Residues 71–93 form a helical; Signal-anchor for type II membrane protein membrane-spanning segment; sequence LTAEVLGIICIVLMATVLKTIVL. Residues 94 to 231 are Extracellular-facing; sequence IPFLEQNNFS…SMIYHCKHKL (138 aa). The N-linked (GlcNAc...) asparagine glycan is linked to N100. One can recognise a C-type lectin domain in the interval 116-229; sequence HCPEEWITYS…GSSMIYHCKH (114 aa). Intrachain disulfides connect C117-C128, C145-C227, and C206-C219. 2 N-linked (GlcNAc...) asparagine glycosylation sites follow: N149 and N178.

As to quaternary structure, heterodimer with KLRD1; disulfide-linked. KLRD1-KLRC2 receptor complex interacts with TYROBP homodimer; this interaction is necessary for the expression on the cell surface. KLRD1-KLRC2 receptor complex can bind with low affinity to HLA-E loaded with self-peptides derived from the signal sequence of classical MHC class Ia. In terms of tissue distribution, expressed in NK cell subsets, in particular in adaptive CD57-positive NK cells (at protein level). Expressed in terminally differentiated cytotoxic gamma-delta T cells (at protein level). Expressed in alpha-beta T cells subsets (at protein level). KLRD1-KLRC1 and KLRD1-KLRC2 are differentially expressed within NK and T cell populations, with only minor subsets expressing both receptor complexes (at protein level).

It is found in the cell membrane. Its function is as follows. Immune activating receptor involved in self-nonself discrimination. In complex with KLRD1 on cytotoxic lymphocyte subsets, recognizes non-classical major histocompatibility (MHC) class Ib HLA-E loaded with signal sequence-derived peptides from non-classical MHC class Ib HLA-G molecules, likely playing a role in the generation and effector functions of adaptive natural killer (NK) cells and in maternal-fetal tolerance during pregnancy. Regulates the effector functions of terminally differentiated cytotoxic lymphocyte subsets, and in particular may play a role in adaptive NK cell response to viral infection. Upon HLA-E-peptide binding, transmits intracellular signals via the adapter protein TYROBP/DAP12, triggering the phosphorylation of proximal signaling molecules and cell activation. The sequence is that of NKG2-C type II integral membrane protein (KLRC2) from Homo sapiens (Human).